We begin with the raw amino-acid sequence, 388 residues long: N-acetylneuraminate epimerase (388 aa).

Residues 1 to 26 (MFSLIRAKRLAIGIAALAWSTGAVMA) form the signal peptide. Kelch repeat units lie at residues 48–92 (MAYV…AAAG), 94–147 (KIFA…VGLA), 149–186 (GRIA…KLVD), 187–232 (SYMG…ATMG), 236–285 (FLLV…VAGA), 307–356 (ANAA…DAPG), and 358–387 (LLVV…LSVE). Residue glutamate 242 is the Proton acceptor of the active site.

The protein belongs to the NanM family. In terms of assembly, homodimer.

The protein resides in the periplasm. It carries out the reaction N-acetyl-alpha-neuraminate = N-acetyl-beta-neuraminate. Converts alpha-N-acetylneuranimic acid (Neu5Ac) to the beta-anomer, accelerating the equilibrium between the alpha- and beta-anomers. Probably facilitates sialidase-negative bacteria to compete successfully for limited amounts of extracellular Neu5Ac, which is likely taken up in the beta-anomer. In addition, the rapid removal of sialic acid from solution might be advantageous to the bacterium to damp down host responses. The sequence is that of N-acetylneuraminate epimerase from Brucella melitensis biotype 1 (strain ATCC 23456 / CCUG 17765 / NCTC 10094 / 16M).